Consider the following 89-residue polypeptide: UPF0250 protein Bphy_0213 (89 aa).

This sequence belongs to the UPF0250 family.

This Paraburkholderia phymatum (strain DSM 17167 / CIP 108236 / LMG 21445 / STM815) (Burkholderia phymatum) protein is UPF0250 protein Bphy_0213.